Here is a 363-residue protein sequence, read N- to C-terminus: MSSFDLKQRAVEWFSNLGIPTQIATFVWICVPIVVLILGITLGVLVLVWLERKISAAVQQRIGPEYAGPLGTIQALADGLKLILKEDIIPSRADKWLFALGPAIVVIPVLLSFLVIPFNHQLIVADISIGMFFWIAVSSVAPVGLLVAGYGSNNKYAFLGGLRAAAQSISYEIPLALCVLSVVLMSNSLSTIEIVEQQSRFGILGWNIWRQPVGFIAFVISALAECERLPFDLPEAEEELVAGYQTEYSGIKFGLFYVASYLNLFASSLFVTILYLGGWSPNISFEQVFNWEQGEQLFAVLDGLIAFAITLSKAYLFLFASILTRWTLPRVRMDQLLDLGWKFLLPVALGNLLLTASFELALL.

The next 8 helical transmembrane spans lie at 26–46 (FVWI…GVLV), 96–116 (WLFA…FLVI), 127–147 (ISIG…GLLV), 175–195 (LALC…IEIV), 203–223 (ILGW…ISAL), 253–273 (FGLF…FVTI), 303–323 (GLIA…ASIL), and 343–363 (FLLP…LALL).

Belongs to the complex I subunit 1 family. As to quaternary structure, NDH is composed of at least 16 different subunits, 5 of which are encoded in the nucleus.

Its subcellular location is the plastid. The protein localises to the chloroplast thylakoid membrane. It carries out the reaction a plastoquinone + NADH + (n+1) H(+)(in) = a plastoquinol + NAD(+) + n H(+)(out). The enzyme catalyses a plastoquinone + NADPH + (n+1) H(+)(in) = a plastoquinol + NADP(+) + n H(+)(out). In terms of biological role, NDH shuttles electrons from NAD(P)H:plastoquinone, via FMN and iron-sulfur (Fe-S) centers, to quinones in the photosynthetic chain and possibly in a chloroplast respiratory chain. The immediate electron acceptor for the enzyme in this species is believed to be plastoquinone. Couples the redox reaction to proton translocation, and thus conserves the redox energy in a proton gradient. This Zygnema circumcarinatum (Green alga) protein is NAD(P)H-quinone oxidoreductase subunit 1, chloroplastic.